Consider the following 324-residue polypeptide: Glyoxylate/hydroxypyruvate reductase B (324 aa).

Catalysis depends on residues Arg237 and Glu266. The Proton donor role is filled by His285.

The protein belongs to the D-isomer specific 2-hydroxyacid dehydrogenase family. GhrB subfamily. In terms of assembly, homodimer.

It localises to the cytoplasm. It catalyses the reaction glycolate + NADP(+) = glyoxylate + NADPH + H(+). It carries out the reaction (R)-glycerate + NAD(+) = 3-hydroxypyruvate + NADH + H(+). The catalysed reaction is (R)-glycerate + NADP(+) = 3-hydroxypyruvate + NADPH + H(+). Its function is as follows. Catalyzes the NADPH-dependent reduction of glyoxylate and hydroxypyruvate into glycolate and glycerate, respectively. This chain is Glyoxylate/hydroxypyruvate reductase B, found in Escherichia coli (strain SMS-3-5 / SECEC).